Reading from the N-terminus, the 598-residue chain is NADH-quinone oxidoreductase subunit C/D (598 aa).

An NADH dehydrogenase I subunit C region spans residues 1–189 (MTDLTTSDSL…DPYVLTKQKE (189 aa)). Residues 213–598 (DFMFLNLGPN…IDFVMSDVDR (386 aa)) form an NADH dehydrogenase I subunit D region.

This sequence in the N-terminal section; belongs to the complex I 30 kDa subunit family. In the C-terminal section; belongs to the complex I 49 kDa subunit family. NDH-1 is composed of 13 different subunits. Subunits NuoB, CD, E, F, and G constitute the peripheral sector of the complex.

Its subcellular location is the cell inner membrane. The enzyme catalyses a quinone + NADH + 5 H(+)(in) = a quinol + NAD(+) + 4 H(+)(out). In terms of biological role, NDH-1 shuttles electrons from NADH, via FMN and iron-sulfur (Fe-S) centers, to quinones in the respiratory chain. The immediate electron acceptor for the enzyme in this species is believed to be ubiquinone. Couples the redox reaction to proton translocation (for every two electrons transferred, four hydrogen ions are translocated across the cytoplasmic membrane), and thus conserves the redox energy in a proton gradient. This Yersinia pseudotuberculosis serotype O:1b (strain IP 31758) protein is NADH-quinone oxidoreductase subunit C/D.